The primary structure comprises 420 residues: Beta-arrestin-2 (420 aa).

Phosphotyrosine is present on tyrosine 48. Proline 176 and proline 181 each carry hydroxyproline; by PHD2. Residues 240-409 form an interaction with TRAF6 region; the sequence is ADICLFSTAQ…EDFARLRLKG (170 aa). Serine 360 is modified (phosphoserine). Residues 374 to 420 form an interaction with AP2B1 region; the sequence is PETDAPVDTNLIEFETNYATDDDIVFEDFARLRLKGLKDEDYDDQFC. At threonine 393 the chain carries Phosphothreonine. Positions 396–406 match the [DE]-X(1,2)-F-X-X-[FL]-X-X-X-R motif motif; sequence DIVFEDFARLR.

It belongs to the arrestin family. In terms of assembly, homooligomer; the self-association is mediated by InsP6-binding. Heterooligomer with ARRB1; the association is mediated by InsP6-binding. Interacts with ADRB2 and CHRM2. Interacts with PDE4A. Interacts with PDE4D. Interacts with MAPK10, MAPK1 and MAPK3. Interacts with DRD2. Interacts with FSHR. Interacts with CLTC. Interacts with HTR2C. Interacts with CRR5. Interacts with CXCR4. Interacts with SRC. Interacts with DUSP16; the interaction is interrupted by stimulation of AGTR1 and activation of MAPK10. Interacts with CHUK; the interaction is enhanced stimulation of ADRB2. Interacts with RELA. Interacts with MDM2; the interaction is enhanced by activation of GPCRs. Interacts with SLC9A5. Interacts with TRAF6. Interacts with IGF1R. Interacts with ENG. Interacts with KIR2DL1, KIR2DL3 and KIR2DL4. Interacts with LDLR. Interacts with AP2B1. Interacts with C5AR1. Interacts with RAF1. Interacts with MAP2K1. Interacts with MAPK1. Interacts with MAPK10; the interaction enhances MAPK10 activation by MAP3K5. Interacts with MAP2K4; the interaction is enhanced by presence of MAP3K5 and MAPK10. Interacts with MAP3K5. Interacts with AKT1. Interacts with IKBKB and MAP3K14. Interacts with SMO (activated). Interacts with GSK3A and GSK3B. Associates with protein phosphatase 2A (PP2A). Interacts with CXCR4; the interaction is dependent on C-terminal phosphorylation of CXCR4 and allows activation of MAPK1 and MAPK3. Interacts with GPR143. Interacts with HCK and CXCR1 (phosphorylated). Interacts with ACKR3 and ACKR4. Interacts with ARRDC1; the interaction is direct. Interacts with GPR61, GPR62 and GPR135. Interacts (via NACHT and LRR domains) with NLRP3; this interaction is direct and inducible by omega-3 polyunsaturated fatty acids (PUFAs). Interacts with FFAR4 (via C-terminus); this interaction is stimulated by long-chain fatty acids (LCFAs). Interacts with GPR35. Interacts with GPR84. Interacts with TIGIT; this interaction inhibits the NF-kappa-B pathway. Interacts with TGFBR3. Phosphorylated at Thr-382 in the cytoplasm; probably dephosphorylated at the plasma membrane. The phosphorylation does not regulate internalization and recycling of ADRB2, interaction with clathrin or AP2B1. Post-translationally, the ubiquitination status appears to regulate the formation and trafficking of beta-arrestin-GPCR complexes and signaling. Ubiquitination appears to occur GPCR-specific. Ubiquitinated by MDM2; the ubiquitination is required for rapid internalization of ADRB2. Deubiquitinated by USP33; the deubiquitination leads to a dissociation of the beta-arrestin-GPCR complex. Stimulation of a class A GPCR, such as ADRB2, induces transient ubiquitination and subsequently promotes association with USP33. Stimulation of a class B GPCR promotes a sustained ubiquitination. Deubiquitinated by USP20; allowing USP20 to deubiquitinate TRAF6 leading to inhibition of NF-kappa-B signaling. In terms of processing, hydroxylation by PHD2 modulates the rate of internalization by slowing down recruitment to the plasma membrane and inhibiting subsequent co-internalization with class A receptors. In terms of tissue distribution, found in a variety of tissues. The short isoform is the most abundant form in all tissues.

Its subcellular location is the cytoplasm. The protein resides in the nucleus. It localises to the cell membrane. It is found in the membrane. The protein localises to the clathrin-coated pit. Its subcellular location is the cytoplasmic vesicle. In terms of biological role, functions in regulating agonist-mediated G-protein coupled receptor (GPCR) signaling by mediating both receptor desensitization and resensitization processes. During homologous desensitization, beta-arrestins bind to the GPRK-phosphorylated receptor and sterically preclude its coupling to the cognate G-protein; the binding appears to require additional receptor determinants exposed only in the active receptor conformation. The beta-arrestins target many receptors for internalization by acting as endocytic adapters (CLASPs, clathrin-associated sorting proteins) and recruiting the GPRCs to the adapter protein 2 complex 2 (AP-2) in clathrin-coated pits (CCPs). However, the extent of beta-arrestin involvement appears to vary significantly depending on the receptor, agonist and cell type. Internalized arrestin-receptor complexes traffic to intracellular endosomes, where they remain uncoupled from G-proteins. Two different modes of arrestin-mediated internalization occur. Class A receptors, like ADRB2, OPRM1, ENDRA, D1AR and ADRA1B dissociate from beta-arrestin at or near the plasma membrane and undergo rapid recycling. Class B receptors, like AVPR2, AGTR1, NTSR1, TRHR and TACR1 internalize as a complex with arrestin and traffic with it to endosomal vesicles, presumably as desensitized receptors, for extended periods of time. Receptor resensitization then requires that receptor-bound arrestin is removed so that the receptor can be dephosphorylated and returned to the plasma membrane. Mediates endocytosis of CCR7 following ligation of CCL19 but not CCL21. Involved in internalization of P2RY1, P2RY4, P2RY6 and P2RY11 and ATP-stimulated internalization of P2RY2. Involved in phosphorylation-dependent internalization of OPRD1 and subsequent recycling or degradation. Involved in ubiquitination of IGF1R. Beta-arrestins function as multivalent adapter proteins that can switch the GPCR from a G-protein signaling mode that transmits short-lived signals from the plasma membrane via small molecule second messengers and ion channels to a beta-arrestin signaling mode that transmits a distinct set of signals that are initiated as the receptor internalizes and transits the intracellular compartment. Acts as a signaling scaffold for MAPK pathways such as MAPK1/3 (ERK1/2) and MAPK10 (JNK3). ERK1/2 and JNK3 activated by the beta-arrestin scaffold are largely excluded from the nucleus and confined to cytoplasmic locations such as endocytic vesicles, also called beta-arrestin signalosomes. Acts as a signaling scaffold for the AKT1 pathway. GPCRs for which the beta-arrestin-mediated signaling relies on both ARRB1 and ARRB2 (codependent regulation) include ADRB2, F2RL1 and PTH1R. For some GPCRs the beta-arrestin-mediated signaling relies on either ARRB1 or ARRB2 and is inhibited by the other respective beta-arrestin form (reciprocal regulation). Increases ERK1/2 signaling in AGTR1- and AVPR2-mediated activation (reciprocal regulation). Involved in CCR7-mediated ERK1/2 signaling involving ligand CCL19. Is involved in type-1A angiotensin II receptor/AGTR1-mediated ERK activity. Is involved in type-1A angiotensin II receptor/AGTR1-mediated MAPK10 activity. Is involved in dopamine-stimulated AKT1 activity in the striatum by disrupting the association of AKT1 with its negative regulator PP2A. Involved in AGTR1-mediated chemotaxis. Appears to function as signaling scaffold involved in regulation of MIP-1-beta-stimulated CCR5-dependent chemotaxis. Involved in attenuation of NF-kappa-B-dependent transcription in response to GPCR or cytokine stimulation by interacting with and stabilizing CHUK. Suppresses UV-induced NF-kappa-B-dependent activation by interacting with CHUK. The function is promoted by stimulation of ADRB2 and dephosphorylation of ARRB2. Involved in p53/TP53-mediated apoptosis by regulating MDM2 and reducing the MDM2-mediated degradation of p53/TP53. May serve as nuclear messenger for GPCRs. Upon stimulation of OR1D2, may be involved in regulation of gene expression during the early processes of fertilization. Also involved in regulation of receptors other than GPCRs. Involved in endocytosis of TGFBR2 and TGFBR3 and down-regulates TGF-beta signaling such as NF-kappa-B activation. Involved in endocytosis of low-density lipoprotein receptor/LDLR. Involved in endocytosis of smoothened homolog/Smo, which also requires GRK2. Involved in endocytosis of SLC9A5. Involved in endocytosis of ENG and subsequent TGF-beta-mediated ERK activation and migration of epithelial cells. Involved in Toll-like receptor and IL-1 receptor signaling through the interaction with TRAF6 which prevents TRAF6 autoubiquitination and oligomerization required for activation of NF-kappa-B and JUN. Involved in insulin resistance by acting as insulin-induced signaling scaffold for SRC, AKT1 and INSR. Involved in regulation of inhibitory signaling of natural killer cells by recruiting PTPN6 and PTPN11 to KIR2DL1. Involved in IL8-mediated granule release in neutrophils. Involved in the internalization of the atypical chemokine receptor ACKR3. Acts as an adapter protein coupling FFAR4 receptor to specific downstream signaling pathways, as well as mediating receptor endocytosis. During the activation step of NLRP3 inflammasome, directly associates with NLRP3 leading to inhibition of pro-inflammatory cytokine release and inhibition of inflammation. This is Beta-arrestin-2 (ARRB2) from Bos taurus (Bovine).